The following is a 189-amino-acid chain: Probable nicotinate-nucleotide adenylyltransferase (189 aa).

Belongs to the NadD family.

The catalysed reaction is nicotinate beta-D-ribonucleotide + ATP + H(+) = deamido-NAD(+) + diphosphate. It participates in cofactor biosynthesis; NAD(+) biosynthesis; deamido-NAD(+) from nicotinate D-ribonucleotide: step 1/1. In terms of biological role, catalyzes the reversible adenylation of nicotinate mononucleotide (NaMN) to nicotinic acid adenine dinucleotide (NaAD). The sequence is that of Probable nicotinate-nucleotide adenylyltransferase from Staphylococcus aureus (strain bovine RF122 / ET3-1).